The primary structure comprises 166 residues: MTEENQVTAQEEAQTPFELQIQRIYIKDVSFEAPNLPTIFHQEWKPQLGFELDTETKQLDEDLYEVVLHINVSTTLEDSGDTAFICEVKQAGVFTIKGIEGIQLAHCLASQCPNVLYPYARELISSLVNRGTFPALNLSPVNFDALFMDYLQRQEAEQNAEAPAVN.

Belongs to the SecB family. In terms of assembly, homotetramer, a dimer of dimers. One homotetramer interacts with 1 SecA dimer.

Its subcellular location is the cytoplasm. In terms of biological role, one of the proteins required for the normal export of preproteins out of the cell cytoplasm. It is a molecular chaperone that binds to a subset of precursor proteins, maintaining them in a translocation-competent state. It also specifically binds to its receptor SecA. This is Protein-export protein SecB from Actinobacillus pleuropneumoniae serotype 7 (strain AP76).